The primary structure comprises 222 residues: Kunitz trypsin inhibitor 3 (222 aa).

The signal sequence occupies residues 1 to 23 (MEKLTLSFITLTVLSAIFTAASA). Residue Asn-65 is glycosylated (N-linked (GlcNAc...) asparagine). Intrachain disulfides connect Cys-72–Cys-119 and Cys-165–Cys-173. N-linked (GlcNAc...) asparagine glycosylation occurs at Asn-175.

Belongs to the protease inhibitor I3 (leguminous Kunitz-type inhibitor) family.

Its function is as follows. Exhibits Kunitz trypsin protease inhibitor activity. This is Kunitz trypsin inhibitor 3 from Arabidopsis thaliana (Mouse-ear cress).